The sequence spans 621 residues: Probable serine/threonine-protein kinase WNK2 (621 aa).

Residues 28-286 enclose the Protein kinase domain; the sequence is GRYTEVLGKG…AQELLMDPFL (259 aa). ATP-binding positions include 108–111 and Lys158; that span reads TEVF. Catalysis depends on Asp175, which acts as the Proton acceptor. Disordered regions lie at residues 438–490, 501–520, 527–553, and 600–621; these read SVEN…SDSP, VEPHIGGNMPNGILKKNDTD, GTSVDLPNPSMIDRKSGVASVSTSPQS, and HREETLTRCRLKADERNRSDKP.

Belongs to the protein kinase superfamily. Ser/Thr protein kinase family. WNK subfamily.

The catalysed reaction is L-seryl-[protein] + ATP = O-phospho-L-seryl-[protein] + ADP + H(+). The enzyme catalyses L-threonyl-[protein] + ATP = O-phospho-L-threonyl-[protein] + ADP + H(+). The sequence is that of Probable serine/threonine-protein kinase WNK2 (WNK2) from Oryza sativa subsp. japonica (Rice).